The primary structure comprises 73 residues: Toxin Td10 (73 aa).

The first 7 residues, Ile-1–Cys-7, serve as a signal peptide directing secretion. Positions Lys-8–Gly-70 constitute an LCN-type CS-alpha/beta domain. Intrachain disulfides connect Cys-18-Cys-69, Cys-22-Cys-44, Cys-30-Cys-50, and Cys-34-Cys-52. Residue Lys-71 is modified to Lysine amide.

The protein belongs to the long (4 C-C) scorpion toxin superfamily. Sodium channel inhibitor family. Beta subfamily. Expressed by the venom gland.

The protein resides in the secreted. Functionally, beta toxins bind voltage-independently at site-4 of sodium channels (Nav) and shift the voltage of activation toward more negative potentials thereby affecting sodium channel activation and promoting spontaneous and repetitive firing. The sequence is that of Toxin Td10 from Tityus discrepans (Venezuelan scorpion).